The sequence spans 520 residues: AAA-ATPase At5g57480 (520 aa).

Positions 1 to 24 (MKEYWTSLASLLGVLAFCQSLMQS) are cleaved as a signal peptide. Residue 244–251 (GPPGTGKS) participates in ATP binding. Disordered stretches follow at residues 307-340 (KKNS…EEGG) and 467-520 (NVKD…TRED). The span at 328–340 (SGSGSGGSGEEGG) shows a compositional bias: gly residues. Residues 497-512 (QNEDEDHDEEEIELED) show a composition bias toward acidic residues.

It belongs to the AAA ATPase family. BCS1 subfamily. It depends on Mg(2+) as a cofactor.

It carries out the reaction ATP + H2O = ADP + phosphate + H(+). The sequence is that of AAA-ATPase At5g57480 from Arabidopsis thaliana (Mouse-ear cress).